An 878-amino-acid chain; its full sequence is MKKLTSAEVRRMFLQFFQEKGHAVEPSASLIPVDDPSLLWINSGVATLKKYFDGRIIPDNPRICNAQKSIRTNDIENVGKTARHHTFFEMLGNFSIGDYFKREAIHWAWEFLTSEKWIGFDPERLSVTVHPEDEEAYNIWRNEIGLPEERIIRLEGKFWDIGEGPSGPNTEIFYDRGEAFGNDPNDPELYPGGENDRYLEVWNLVFSQFNHNPDGTYTPLPKKNIDTGMGLERMCSILQDVPTNFETDLFMPIIRATEQIAGEQYGKDPNKDVAFKVIADHIRAVTFAVGDGALPSNEGRGYVLRRLLRRAVRYAKQIGIDRPFMYELVPVVGEIMQDYYPEVKEKADFIARVIRTEEERFHETLHEGLAILAEVMEKAKKQGSTVIPGEEAFRLYDTYGFPLELTEEYAAEAGMSVDHAGFEREMERQRERARAARQDVDSMQVQGGVLGDIKDESRFVGYDELVVSSTVIAIIKDGQPVEEVGTGEEAQIIVDVTPFYAESGGQIADQGVFEGETGTAVVKDVQKAPNGQHLHSIVVERGAVKKGDRYTARVDEVKRSQIVKNHTATHLLHQALKDVLGRHVNQAGSLVAPDRLRFDFTHFGQVKPDELERIEAIVNEQIWKSIPVDIFYKPLEEAKAMGAMALFGEKYGDIVRVVKVGDYSLELCGGCHVPNTAAIGLFKIVSESGIGAGTRRIEAVTGEAAYRFMSEQLALLQEAAQKLKTSPRELNARLDGLFAELRQLQRENESLAARLAHMEAEHLTRQVKEVGGVPVLAAKVQANDMNQLRAMADDLKQKLGTAVIVLAAVQGGKVQLIAAVTDDLVKKGYHAGKLVKEVASRCGGGGGGRPDMAQAGGKDANKVGEALDYVETWVKSIS.

Residues H566, H570, C668, and H672 each contribute to the Zn(2+) site.

The protein belongs to the class-II aminoacyl-tRNA synthetase family. Requires Zn(2+) as cofactor.

The protein localises to the cytoplasm. The catalysed reaction is tRNA(Ala) + L-alanine + ATP = L-alanyl-tRNA(Ala) + AMP + diphosphate. In terms of biological role, catalyzes the attachment of alanine to tRNA(Ala) in a two-step reaction: alanine is first activated by ATP to form Ala-AMP and then transferred to the acceptor end of tRNA(Ala). Also edits incorrectly charged Ser-tRNA(Ala) and Gly-tRNA(Ala) via its editing domain. This is Alanine--tRNA ligase from Geobacillus thermodenitrificans (strain NG80-2).